A 374-amino-acid chain; its full sequence is DNA replication and repair protein RecF (374 aa).

Gly-30–Thr-37 is an ATP binding site.

Belongs to the RecF family.

It is found in the cytoplasm. The RecF protein is involved in DNA metabolism; it is required for DNA replication and normal SOS inducibility. RecF binds preferentially to single-stranded, linear DNA. It also seems to bind ATP. This chain is DNA replication and repair protein RecF, found in Pediococcus pentosaceus (strain ATCC 25745 / CCUG 21536 / LMG 10740 / 183-1w).